The following is a 407-amino-acid chain: 1-deoxy-D-xylulose 5-phosphate reductoisomerase (407 aa).

Residues Thr27, Gly28, Ser29, Ile30, Ala53, Arg54, Asn55, and Asn140 each contribute to the NADPH site. A 1-deoxy-D-xylulose 5-phosphate-binding site is contributed by Lys141. Glu142 serves as a coordination point for NADPH. Asp166 lines the Mn(2+) pocket. 1-deoxy-D-xylulose 5-phosphate-binding residues include Ser167, Glu168, Ser192, and His215. A Mn(2+)-binding site is contributed by Glu168. Gly221 contributes to the NADPH binding site. 1-deoxy-D-xylulose 5-phosphate contacts are provided by Ser228, Asn233, Lys234, and Glu237. Glu237 serves as a coordination point for Mn(2+).

Belongs to the DXR family. The cofactor is Mg(2+). Mn(2+) is required as a cofactor.

It carries out the reaction 2-C-methyl-D-erythritol 4-phosphate + NADP(+) = 1-deoxy-D-xylulose 5-phosphate + NADPH + H(+). The protein operates within isoprenoid biosynthesis; isopentenyl diphosphate biosynthesis via DXP pathway; isopentenyl diphosphate from 1-deoxy-D-xylulose 5-phosphate: step 1/6. Catalyzes the NADPH-dependent rearrangement and reduction of 1-deoxy-D-xylulose-5-phosphate (DXP) to 2-C-methyl-D-erythritol 4-phosphate (MEP). This chain is 1-deoxy-D-xylulose 5-phosphate reductoisomerase, found in Oleidesulfovibrio alaskensis (strain ATCC BAA-1058 / DSM 17464 / G20) (Desulfovibrio alaskensis).